Consider the following 350-residue polypeptide: Protein RecA (350 aa).

Residue 68-75 (GPESSGKT) participates in ATP binding.

This sequence belongs to the RecA family.

The protein resides in the cytoplasm. Can catalyze the hydrolysis of ATP in the presence of single-stranded DNA, the ATP-dependent uptake of single-stranded DNA by duplex DNA, and the ATP-dependent hybridization of homologous single-stranded DNAs. It interacts with LexA causing its activation and leading to its autocatalytic cleavage. This Symbiobacterium thermophilum (strain DSM 24528 / JCM 14929 / IAM 14863 / T) protein is Protein RecA.